The primary structure comprises 499 residues: Protein-tyrosine sulfotransferase (499 aa).

The Cytoplasmic portion of the chain corresponds to 1 to 9; that stretch reads MRLPYRNKK. A helical; Signal-anchor for type II membrane protein transmembrane segment spans residues 10-30; that stretch reads VTLWVLFGIIVITMFLFKFTE. Topologically, residues 31–499 are lumenal; that stretch reads LRPTCLFKVD…NIMEDPMADT (469 aa). 80–84 lines the 3'-phosphoadenylyl sulfate pocket; the sequence is RSGTT. A disulfide bond links C98 and C158. E101 (proton donor/acceptor) is an active-site residue. An interaction with peptide substrate region spans residues 103–107; sequence RVIPR. 3 residues coordinate 3'-phosphoadenylyl sulfate: R185, S193, and R197. C227 and C235 are disulfide-bonded. Residues Y240, 287-296, and K302 contribute to the 3'-phosphoadenylyl sulfate site; that span reads SSDQVIKPVN. N346 and N380 each carry an N-linked (GlcNAc...) asparagine glycan. 2 disordered regions span residues 362 to 460 and 476 to 499; these read KQVL…QKPK and NNINNNINNNNNNNNIMEDPMADT. 2 stretches are compositionally biased toward low complexity: residues 375 to 400 and 408 to 434; these read TNTIINNSNNKDNNNNQYTINKIIPE and HVQQQHLQQQQQQHLQQQQHQRQQQQQ. Over residues 443 to 460 the composition is skewed to basic and acidic residues; it reads EREAEPDREQQLLHQKPK. The span at 476–491 shows a compositional bias: low complexity; it reads NNINNNINNNNNNNNI.

It belongs to the protein sulfotransferase family.

Its subcellular location is the golgi apparatus membrane. It carries out the reaction L-tyrosyl-[protein] + 3'-phosphoadenylyl sulfate = O-sulfo-L-tyrosine-[protein] + adenosine 3',5'-bisphosphate + H(+). Catalyzes the O-sulfation of tyrosine residues within acidic motifs of polypeptides. Has a role in protein secretion. The protein is Protein-tyrosine sulfotransferase of Drosophila melanogaster (Fruit fly).